A 538-amino-acid chain; its full sequence is Probable bifunctional tRNA threonylcarbamoyladenosine biosynthesis protein (538 aa).

A kae1 region spans residues 1 to 327 (MIVLICLGIE…FRTDEVEAPW (327 aa)). The Fe cation site is built by H111, H115, and Y132. Residues 132 to 136 (YVSGG), D164, G177, E181, and N260 each bind L-threonylcarbamoyladenylate. D288 lines the Fe cation pocket. The 203-residue stretch at 336–538 (KLPDNLIAKG…EIESRGRYTH (203 aa)) folds into the Protein kinase domain. Residues 342–350 (IAKGAESDI) and K363 contribute to the ATP site. D452 (proton acceptor; for kinase activity) is an active-site residue.

The protein in the N-terminal section; belongs to the KAE1 / TsaD family. In the C-terminal section; belongs to the protein kinase superfamily. Tyr protein kinase family. BUD32 subfamily. As to quaternary structure, component of the KEOPS complex that consists of Kae1, Bud32, Cgi121 and Pcc1; the whole complex dimerizes. Fe(2+) is required as a cofactor.

It is found in the cytoplasm. It catalyses the reaction L-seryl-[protein] + ATP = O-phospho-L-seryl-[protein] + ADP + H(+). It carries out the reaction L-threonyl-[protein] + ATP = O-phospho-L-threonyl-[protein] + ADP + H(+). The enzyme catalyses L-threonylcarbamoyladenylate + adenosine(37) in tRNA = N(6)-L-threonylcarbamoyladenosine(37) in tRNA + AMP + H(+). Its function is as follows. Required for the formation of a threonylcarbamoyl group on adenosine at position 37 (t(6)A37) in tRNAs that read codons beginning with adenine. Is a component of the KEOPS complex that is probably involved in the transfer of the threonylcarbamoyl moiety of threonylcarbamoyl-AMP (TC-AMP) to the N6 group of A37. The Kae1 domain likely plays a direct catalytic role in this reaction. The Bud32 domain probably displays kinase activity that regulates Kae1 function. The sequence is that of Probable bifunctional tRNA threonylcarbamoyladenosine biosynthesis protein from Methanobrevibacter smithii (strain ATCC 35061 / DSM 861 / OCM 144 / PS).